The sequence spans 142 residues: MSESIDFYDFERLLDKAYEELPENVKSHKSRFEVPPAVVTIAGNRTIIENFVDIAEAMNRDPSHLLKFILREVATAGTLEGRRVILQGRFTPYLIANKLKKYLKEYVICPVCGSPDTKIIKRDRFYFLKCEACGAETPIQHL.

This sequence belongs to the eIF-2-beta/eIF-5 family. Heterotrimer composed of an alpha, a beta and a gamma chain.

Its function is as follows. eIF-2 functions in the early steps of protein synthesis by forming a ternary complex with GTP and initiator tRNA. The polypeptide is Translation initiation factor 2 subunit beta (Thermococcus gammatolerans (strain DSM 15229 / JCM 11827 / EJ3)).